Consider the following 215-residue polypeptide: LexA repressor (215 aa).

Residues arginine 28 to arginine 48 constitute a DNA-binding region (H-T-H motif). Active-site for autocatalytic cleavage activity residues include serine 133 and lysine 170.

The protein belongs to the peptidase S24 family. In terms of assembly, homodimer.

It catalyses the reaction Hydrolysis of Ala-|-Gly bond in repressor LexA.. Functionally, represses a number of genes involved in the response to DNA damage (SOS response), including recA and lexA. In the presence of single-stranded DNA, RecA interacts with LexA causing an autocatalytic cleavage which disrupts the DNA-binding part of LexA, leading to derepression of the SOS regulon and eventually DNA repair. The polypeptide is LexA repressor (Burkholderia mallei (strain NCTC 10247)).